A 550-amino-acid polypeptide reads, in one-letter code: CTP synthase (550 aa).

Residues 1 to 277 (MNGSADAGPR…GRAVERALGL (277 aa)) are amidoligase domain. Ser23 serves as a coordination point for CTP. Residue Ser23 participates in UTP binding. 24 to 29 (SLGKGI) is a binding site for ATP. Tyr64 is a binding site for L-glutamine. ATP is bound at residue Asp81. Positions 81 and 151 each coordinate Mg(2+). CTP-binding positions include 158-160 (DIE), 198-203 (KTKPTQ), and Lys234. UTP-binding positions include 198-203 (KTKPTQ) and Lys234. Positions 302 to 549 (KIAIAGKYVK…VEAALAYQER (248 aa)) constitute a Glutamine amidotransferase type-1 domain. Gly364 lines the L-glutamine pocket. The active-site Nucleophile; for glutamine hydrolysis is Cys391. Residues 392–395 (LGLQ), Glu415, and Arg472 contribute to the L-glutamine site. Residues His522 and Glu524 contribute to the active site.

Belongs to the CTP synthase family. In terms of assembly, homotetramer.

It catalyses the reaction UTP + L-glutamine + ATP + H2O = CTP + L-glutamate + ADP + phosphate + 2 H(+). The enzyme catalyses L-glutamine + H2O = L-glutamate + NH4(+). It carries out the reaction UTP + NH4(+) + ATP = CTP + ADP + phosphate + 2 H(+). Its pathway is pyrimidine metabolism; CTP biosynthesis via de novo pathway; CTP from UDP: step 2/2. Allosterically activated by GTP, when glutamine is the substrate; GTP has no effect on the reaction when ammonia is the substrate. The allosteric effector GTP functions by stabilizing the protein conformation that binds the tetrahedral intermediate(s) formed during glutamine hydrolysis. Inhibited by the product CTP, via allosteric rather than competitive inhibition. Its function is as follows. Catalyzes the ATP-dependent amination of UTP to CTP with either L-glutamine or ammonia as the source of nitrogen. Regulates intracellular CTP levels through interactions with the four ribonucleotide triphosphates. The chain is CTP synthase from Thermus thermophilus (strain ATCC BAA-163 / DSM 7039 / HB27).